A 187-amino-acid chain; its full sequence is Calmodulin-like protein 1 (187 aa).

The residue at position 2 (Ala-2) is an N-acetylalanine. 4 EF-hand domains span residues 8 to 43 (EQIG…LGQN), 44 to 79 (PTEA…KLRD), 81 to 116 (DSEE…IGER), and 117 to 152 (LTDE…KKRR). Residues Asp-21, Asp-23, Asp-25, Ser-27, Glu-32, Asp-57, Asp-59, Asn-61, Asn-63, Glu-68, Asp-94, Asp-96, Asn-98, Glu-105, Asp-130, Asp-132, Asp-134, Gln-136, and Glu-141 each contribute to the Ca(2+) site. Residues 153–187 (KRIEEKRDHDGGSRTKSAGPSAAPASKRGQKCVIL) form a disordered region. A compositionally biased stretch (basic and acidic residues) spans 154–165 (RIEEKRDHDGGS). Residues 169 to 178 (SAGPSAAPAS) are compositionally biased toward low complexity. Cys-184 is modified (cysteine methyl ester). Cys-184 carries S-farnesyl cysteine lipidation. A propeptide spans 185–187 (VIL) (removed in mature form).

Belongs to the calmodulin family.

It is found in the membrane. In terms of biological role, calcium-binding protein that binds and activates CAMK1, a calcium/calmodulin-dependent kinase. The polypeptide is Calmodulin-like protein 1 (CML1) (Oryza sativa subsp. japonica (Rice)).